The chain runs to 464 residues: Argininosuccinate lyase (464 aa).

This sequence belongs to the lyase 1 family. Argininosuccinate lyase subfamily.

Its subcellular location is the cytoplasm. The enzyme catalyses 2-(N(omega)-L-arginino)succinate = fumarate + L-arginine. It functions in the pathway amino-acid biosynthesis; L-arginine biosynthesis; L-arginine from L-ornithine and carbamoyl phosphate: step 3/3. The protein is Argininosuccinate lyase of Frankia casuarinae (strain DSM 45818 / CECT 9043 / HFP020203 / CcI3).